The following is a 375-amino-acid chain: Platelet-derived growth factor receptor-like protein (375 aa).

A signal peptide spans 1–21; that stretch reads MKIWLLLGLLLMHEALEDVTG. A disordered region spans residues 20 to 64; it reads TGQHPPKNKRPKEPGENRIKPTNKKVKPKIPKIKDRDSADPTPKT. Residues 40–50 show a composition bias toward basic residues; it reads PTNKKVKPKIP. Residues 62 to 159 form the Ig-like C2-type 1 domain; it reads PKTQSIMTQM…GYVCRRDEAK (98 aa). C96 and C143 are oxidised to a cystine. Residues N132 and N219 are each glycosylated (N-linked (GlcNAc...) asparagine). An Ig-like C2-type 2 domain is found at 272 to 373; it reads PSTTILASSN…GQTTVATTVE (102 aa). C293 and C357 are oxidised to a cystine.

In terms of assembly, forms a complex composed of PDGFRL, TNK2 and GRB2.

The protein resides in the secreted. The polypeptide is Platelet-derived growth factor receptor-like protein (PDGFRL) (Bos taurus (Bovine)).